The sequence spans 471 residues: Ribulose bisphosphate carboxylase large chain (471 aa).

Substrate-binding residues include Asn-115 and Thr-165. Lys-167 functions as the Proton acceptor in the catalytic mechanism. Lys-169 serves as a coordination point for substrate. Mg(2+)-binding residues include Lys-193, Asp-195, and Glu-196. At Lys-193 the chain carries N6-carboxylysine. Residue His-286 is the Proton acceptor of the active site. 3 residues coordinate substrate: Arg-287, His-319, and Ser-371.

Belongs to the RuBisCO large chain family. Type I subfamily. As to quaternary structure, heterohexadecamer of 8 large chains and 8 small chains. Forms a CsoS2-CsoS1-RuBisCO complex. It depends on Mg(2+) as a cofactor.

It is found in the carboxysome. It carries out the reaction 2 (2R)-3-phosphoglycerate + 2 H(+) = D-ribulose 1,5-bisphosphate + CO2 + H2O. It catalyses the reaction D-ribulose 1,5-bisphosphate + O2 = 2-phosphoglycolate + (2R)-3-phosphoglycerate + 2 H(+). Its function is as follows. RuBisCO catalyzes two reactions: the carboxylation of D-ribulose 1,5-bisphosphate, the primary event in carbon dioxide fixation, as well as the oxidative fragmentation of the pentose substrate in the photorespiration process. Both reactions occur simultaneously and in competition at the same active site. This chain is Ribulose bisphosphate carboxylase large chain, found in Parasynechococcus marenigrum (strain WH8102).